The following is a 249-amino-acid chain: Aliphatic sulfonates import ATP-binding protein SsuB 2 (249 aa).

Residues 15–231 (VHVRDLARRF…DHGDPRFAQF (217 aa)) enclose the ABC transporter domain. 47–54 (GRSGSGKS) contributes to the ATP binding site.

Belongs to the ABC transporter superfamily. Aliphatic sulfonates importer (TC 3.A.1.17.2) family. As to quaternary structure, the complex is composed of two ATP-binding proteins (SsuB), two transmembrane proteins (SsuC) and a solute-binding protein (SsuA).

The protein resides in the cell inner membrane. The enzyme catalyses ATP + H2O + aliphatic sulfonate-[sulfonate-binding protein]Side 1 = ADP + phosphate + aliphatic sulfonateSide 2 + [sulfonate-binding protein]Side 1.. Part of the ABC transporter complex SsuABC involved in aliphatic sulfonates import. Responsible for energy coupling to the transport system. The polypeptide is Aliphatic sulfonates import ATP-binding protein SsuB 2 (Rhizobium johnstonii (strain DSM 114642 / LMG 32736 / 3841) (Rhizobium leguminosarum bv. viciae)).